We begin with the raw amino-acid sequence, 188 residues long: MTTRPATDRRKMPTGREEVAAAILQAATDLFAERGPAATSIRDIAARSKVNHGLVFRHFGTKDQLVGAVLDHLGTKLTRLLHSEAPADIIERALDRHGRVLARALLDGYPVGQLQQRFPNVAELLDAVRPRYDSDLGARLAVAHALALQFGWRLFAPMLRSATGIDELTGDELRLSVNDAVARILEPH.

The HTH tetR-type domain occupies 17-77 (EEVAAAILQA…AVLDHLGTKL (61 aa)). The segment at residues 40–59 (SIRDIAARSKVNHGLVFRHF) is a DNA-binding region (H-T-H motif).

In terms of biological role, negatively regulates the expression of sulfate ester dioxygenase Mb3440 and its own expression. This chain is HTH-type transcriptional regulator Mb3439c, found in Mycobacterium bovis (strain ATCC BAA-935 / AF2122/97).